The primary structure comprises 188 residues: Peptidyl-tRNA hydrolase (188 aa).

Tyr-14 is a tRNA binding site. The Proton acceptor role is filled by His-19. Tyr-64, Asn-66, and Asn-113 together coordinate tRNA.

This sequence belongs to the PTH family. As to quaternary structure, monomer.

The protein localises to the cytoplasm. The enzyme catalyses an N-acyl-L-alpha-aminoacyl-tRNA + H2O = an N-acyl-L-amino acid + a tRNA + H(+). In terms of biological role, hydrolyzes ribosome-free peptidyl-tRNAs (with 1 or more amino acids incorporated), which drop off the ribosome during protein synthesis, or as a result of ribosome stalling. Catalyzes the release of premature peptidyl moieties from peptidyl-tRNA molecules trapped in stalled 50S ribosomal subunits, and thus maintains levels of free tRNAs and 50S ribosomes. The chain is Peptidyl-tRNA hydrolase from Chloroflexus aggregans (strain MD-66 / DSM 9485).